We begin with the raw amino-acid sequence, 252 residues long: uncharacterized protein (252 aa).

The Clp R domain maps to 96-238 (FRRFTPRARN…ITTLASLTGA (143 aa)). 2 repeat regions span residues 99–164 (FTPR…PAVT) and 172–238 (FSGP…LTGA).

It belongs to the ClpA/ClpB family. ClpC subfamily.

This is an uncharacterized protein from Mycobacterium bovis (strain ATCC BAA-935 / AF2122/97).